The chain runs to 87 residues: Small ribosomal subunit protein bS20 (87 aa).

Positions 1-27 (MANIKSAKKRAVTSEKRRKHNASRRSM) are disordered.

This sequence belongs to the bacterial ribosomal protein bS20 family.

Its function is as follows. Binds directly to 16S ribosomal RNA. This is Small ribosomal subunit protein bS20 from Erwinia tasmaniensis (strain DSM 17950 / CFBP 7177 / CIP 109463 / NCPPB 4357 / Et1/99).